The following is a 628-amino-acid chain: Voltage-gated potassium channel KCNC4 (628 aa).

Disordered regions lie at residues 1 to 24 (MISSVCVSSYRGRKSGNKPPSKTC) and 62 to 88 (LAWLADPDGGGRPESDGGGAGSSGSSG). Residues 1-28 (MISSVCVSSYRGRKSGNKPPSKTCLKEE) form an inactivation gate region. The Cytoplasmic segment spans residues 1–230 (MISSVCVSSY…EDPYSSRAAR (230 aa)). Phosphoserine is present on residues serine 8, serine 9, serine 15, and serine 21. Over residues 77 to 88 (DGGGAGSSGSSG) the composition is skewed to gly residues. 4 residues coordinate Zn(2+): histidine 120, cysteine 126, cysteine 147, and cysteine 148. Residues 231–251 (VVAFASLFFILVSITTFCLET) form a helical membrane-spanning segment. N-linked (GlcNAc...) asparagine glycans are attached at residues asparagine 260 and asparagine 269. The helical transmembrane segment at 282–302 (EPILTYIEGVCVMWFTLEFLV) threads the bilayer. The Cytoplasmic portion of the chain corresponds to 303–316 (RIVCCPDTLDFVKN). The chain crosses the membrane as a helical span at residues 317 to 337 (LLNIIDFVAILPFYLEVGLSG). The chain crosses the membrane as a helical; Voltage-sensor span at residues 349 to 368 (FLRVVRFVRILRIFKLTRHF). The Cytoplasmic portion of the chain corresponds to 369–384 (VGLRVLGHTLRASTNE). The chain crosses the membrane as a helical span at residues 385-405 (FLLLIIFLALGVLIFATMIYY). Threonine 440, leucine 441, glycine 442, and tyrosine 443 together coordinate K(+). Positions 440-445 (TLGYGD) match the Selectivity filter motif. Residues 456–476 (VGALCALAGVLTIAMPVPVIV) traverse the membrane as a helical segment. The Cytoplasmic portion of the chain corresponds to 477-628 (NNFGMYYSLA…CVPVSHTCAL (152 aa)). Residues 493 to 584 (PKKRKKHVPR…RRALRRSGTR (92 aa)) form a disordered region. The span at 531-546 (AREEGVVERKRADSKQ) shows a compositional bias: basic and acidic residues.

Belongs to the potassium channel family. C (Shaw) (TC 1.A.1.2) subfamily. Kv3.4/KCNC4 sub-subfamily. In terms of assembly, homotetramer. Heterotetramer of potassium channel proteins. Phosphorylation of serine residues in the inactivation gate inhibits rapid channel closure.

The protein localises to the membrane. It catalyses the reaction K(+)(in) = K(+)(out). In terms of biological role, voltage-gated potassium channel that opens in response to the voltage difference across the membrane, forming a potassium-selective channel through which potassium ions pass in accordance with their electrochemical gradient. The channel displays rapid activation and inactivation kinetics. In Mus musculus (Mouse), this protein is Voltage-gated potassium channel KCNC4.